The following is a 437-amino-acid chain: Adenylosuccinate synthetase (437 aa).

GTP is bound by residues 12-18 (GDEGKGK) and 40-42 (GHT). Asp13 serves as the catalytic Proton acceptor. Residues Asp13 and Gly40 each coordinate Mg(2+). IMP is bound by residues 13-16 (DEGK), 38-41 (NAGH), Thr128, Arg142, Gln223, Thr238, and Arg302. His41 acts as the Proton donor in catalysis. 298 to 304 (TTTGRRR) lines the substrate pocket. GTP is bound by residues Arg304, 330–332 (KLD), and 412–414 (SLG).

This sequence belongs to the adenylosuccinate synthetase family. As to quaternary structure, homodimer. Mg(2+) serves as cofactor.

Its subcellular location is the cytoplasm. It carries out the reaction IMP + L-aspartate + GTP = N(6)-(1,2-dicarboxyethyl)-AMP + GDP + phosphate + 2 H(+). The protein operates within purine metabolism; AMP biosynthesis via de novo pathway; AMP from IMP: step 1/2. In terms of biological role, plays an important role in the de novo pathway of purine nucleotide biosynthesis. Catalyzes the first committed step in the biosynthesis of AMP from IMP. The chain is Adenylosuccinate synthetase from Parasynechococcus marenigrum (strain WH8102).